Reading from the N-terminus, the 102-residue chain is Nucleoid-associated protein WIGBR5260 (102 aa).

Belongs to the YbaB/EbfC family. In terms of assembly, homodimer.

Its subcellular location is the cytoplasm. The protein resides in the nucleoid. Binds to DNA and alters its conformation. May be involved in regulation of gene expression, nucleoid organization and DNA protection. This Wigglesworthia glossinidia brevipalpis protein is Nucleoid-associated protein WIGBR5260.